The primary structure comprises 359 residues: Phosphoserine aminotransferase (359 aa).

Position 41 (Arg41) interacts with L-glutamate. Pyridoxal 5'-phosphate contacts are provided by residues 75-76 (AS), Trp101, Thr152, Asp171, and Gln194. Position 195 is an N6-(pyridoxal phosphate)lysine (Lys195). A pyridoxal 5'-phosphate-binding site is contributed by 236–237 (NT).

Belongs to the class-V pyridoxal-phosphate-dependent aminotransferase family. SerC subfamily. In terms of assembly, homodimer. Pyridoxal 5'-phosphate serves as cofactor.

The protein resides in the cytoplasm. The catalysed reaction is O-phospho-L-serine + 2-oxoglutarate = 3-phosphooxypyruvate + L-glutamate. It catalyses the reaction 4-(phosphooxy)-L-threonine + 2-oxoglutarate = (R)-3-hydroxy-2-oxo-4-phosphooxybutanoate + L-glutamate. Its pathway is amino-acid biosynthesis; L-serine biosynthesis; L-serine from 3-phospho-D-glycerate: step 2/3. It functions in the pathway cofactor biosynthesis; pyridoxine 5'-phosphate biosynthesis; pyridoxine 5'-phosphate from D-erythrose 4-phosphate: step 3/5. Its function is as follows. Catalyzes the reversible conversion of 3-phosphohydroxypyruvate to phosphoserine and of 3-hydroxy-2-oxo-4-phosphonooxybutanoate to phosphohydroxythreonine. This Acinetobacter baumannii (strain AB307-0294) protein is Phosphoserine aminotransferase.